The following is a 458-amino-acid chain: ATP synthase subunit beta (458 aa).

Residue 148 to 155 (GGAGVGKT) coordinates ATP.

It belongs to the ATPase alpha/beta chains family. F-type ATPases have 2 components, CF(1) - the catalytic core - and CF(0) - the membrane proton channel. CF(1) has five subunits: alpha(3), beta(3), gamma(1), delta(1), epsilon(1). CF(0) has three main subunits: a(1), b(2) and c(9-12). The alpha and beta chains form an alternating ring which encloses part of the gamma chain. CF(1) is attached to CF(0) by a central stalk formed by the gamma and epsilon chains, while a peripheral stalk is formed by the delta and b chains.

Its subcellular location is the cell inner membrane. It carries out the reaction ATP + H2O + 4 H(+)(in) = ADP + phosphate + 5 H(+)(out). Produces ATP from ADP in the presence of a proton gradient across the membrane. The catalytic sites are hosted primarily by the beta subunits. This is ATP synthase subunit beta from Actinobacillus succinogenes (strain ATCC 55618 / DSM 22257 / CCUG 43843 / 130Z).